A 234-amino-acid chain; its full sequence is Adenosine 5'-phosphosulfate reductase (234 aa).

4 residues coordinate [4Fe-4S] cluster: C120, C121, C203, and C206. C229 (nucleophile; cysteine thiosulfonate intermediate) is an active-site residue.

It belongs to the PAPS reductase family. CysH subfamily. Requires [4Fe-4S] cluster as cofactor.

Its subcellular location is the cytoplasm. The catalysed reaction is [thioredoxin]-disulfide + sulfite + AMP + 2 H(+) = adenosine 5'-phosphosulfate + [thioredoxin]-dithiol. It functions in the pathway sulfur metabolism; hydrogen sulfide biosynthesis; sulfite from sulfate. In terms of biological role, catalyzes the formation of sulfite from adenosine 5'-phosphosulfate (APS) using thioredoxin as an electron donor. The protein is Adenosine 5'-phosphosulfate reductase of Bacillus cytotoxicus (strain DSM 22905 / CIP 110041 / 391-98 / NVH 391-98).